Here is a 772-residue protein sequence, read N- to C-terminus: Gelsolin (772 aa).

Positions 1–17 (LGALVVALCALSPPARA) are cleaved as a signal peptide. The propeptide occupies 18 to 33 (ATASRGAPQARAPQGR). Residues 19 to 38 (TASRGAPQARAPQGRVSPMR) form a disordered region. Residues 41 to 166 (TMVVEHPEFL…YKKGGVASGF (126 aa)) are actin-severing. One copy of the Gelsolin-like 1 repeat lies at 66-148 (FDLVPVPPNL…VQGFESATFL (83 aa)). The residue at position 76 (Tyr76) is a Phosphotyrosine. Residues Gly82, Asp83, Glu114, Asp126, Gly131, and Ala133 each coordinate Ca(2+). The tract at residues 113 to 116 (DESG) is actin-actin interfilament contact point. Residue 152–159 (KSGLKYKK) participates in a 1,2-diacyl-sn-glycero-3-phospho-(1D-myo-inositol-4,5-bisphosphate) binding. Residue Val162 coordinates Ca(2+). 178–186 (RLFQVKGRR) is an a 1,2-diacyl-sn-glycero-3-phospho-(1D-myo-inositol-4,5-bisphosphate) binding site. The stretch at 188–260 (VRATEVPVSW…SEEDAEPAGM (73 aa)) is one Gelsolin-like 2 repeat. Ca(2+) contacts are provided by Gly203 and Asp204. Cys205 and Cys218 are joined by a disulfide. Ca(2+)-binding residues include Glu226, Asp276, Glu319, Asp320, and Glu344. The Gelsolin-like 3 repeat unit spans residues 307-379 (DENPFAQGAL…LPEGGETPLF (73 aa)). Phosphotyrosine occurs at positions 399 and 455. Residues 424 to 772 (AAQHGMDDDG…LDRAIAELAA (349 aa)) are actin-binding, Ca-sensitive. A Gelsolin-like 4 repeat occupies 445–526 (SNKVPVDPAT…VQGKEPAHLM (82 aa)). 7 residues coordinate Ca(2+): Gly461, Asp462, Glu492, Asp504, Gly509, Pro511, and Thr541. Residues 567 to 632 (RAVEVIPKAG…AEGSEPDSFW (66 aa)) form a Gelsolin-like 5 repeat. Lys574 bears the N6-acetyllysine mark. Asn581 and Asp582 together coordinate Ca(2+). Tyr593 is modified (phosphotyrosine). Ca(2+) is bound at residue Glu604. The residue at position 641 (Tyr641) is a Phosphotyrosine. Residues 671-746 (VEEVPGELMQ…VKQGFEPPSF (76 aa)) form a Gelsolin-like 6 repeat. Ca(2+)-binding residues include Asp686, Asp687, and Glu709. At Thr732 the chain carries Phosphothreonine.

Belongs to the villin/gelsolin family. As to quaternary structure, binds to actin and to fibronectin. Identified in a complex composed of ACTA1, COBL, GSN and TMSB4X. Interacts with the inactive form of EIF2AK2/PKR. Interacts with FLII. Phosphorylated on tyrosine residues in vitro.

The protein resides in the cytoplasm. It is found in the cytoskeleton. Its subcellular location is the secreted. Its function is as follows. Calcium-regulated, actin-modulating protein that binds to the plus (or barbed) ends of actin monomers or filaments, preventing monomer exchange (end-blocking or capping). It can promote the assembly of monomers into filaments (nucleation) as well as sever filaments already formed. Plays a role in ciliogenesis. The protein is Gelsolin (GSN) of Sus scrofa (Pig).